The following is a 30-amino-acid chain: Trypsin inhibitor 7 (30 aa).

3 disulfides stabilise this stretch: Cys-4-Cys-21, Cys-11-Cys-23, and Cys-17-Cys-29.

Belongs to the protease inhibitor I7 (squash-type serine protease inhibitor) family.

The protein resides in the secreted. Strongly inhibits trypsin, weakly inhibits chymotrypsin. The sequence is that of Trypsin inhibitor 7 from Cyclanthera pedata (Achocha).